Reading from the N-terminus, the 531-residue chain is SWI/SNF-related matrix-associated actin-dependent regulator of chromatin subfamily D member 2 (531 aa).

The tract at residues 20 to 85 (AVAAALGAPP…MSPGSRMPMA (66 aa)) is disordered. Residues 34 to 45 (PGMLPNPALRGP) show a composition bias toward low complexity. 2 positions are modified to asymmetric dimethylarginine: Arg-81 and Arg-104. The disordered stretch occupies residues 202–226 (FSPSKADGDNSGTAGTPGGTPAADK). Ser-203 is subject to Phosphoserine. Thr-217 carries the post-translational modification Phosphothreonine. Lys-226 is covalently cross-linked (Glycyl lysine isopeptide (Lys-Gly) (interchain with G-Cter in SUMO2)). Residues 306–383 (HQPPQYKLDP…PMKLAGLLQH (78 aa)) enclose the SWIB/MDM2 domain.

This sequence belongs to the SMARCD family. In terms of assembly, component of the multiprotein chromatin-remodeling complexes SWI/SNF: SWI/SNF-A (BAF), SWI/SNF-B (PBAF) and related complexes. The canonical complex contains a catalytic subunit (either SMARCA4/BRG1/BAF190A or SMARCA2/BRM/BAF190B), and at least SMARCE1, ACTL6A/BAF53, SMARCC1/BAF155, SMARCC2/BAF170, and SMARCB1/SNF5/BAF47. Other subunits specific to each of the complexes may also be present permitting several possible combinations developmentally and tissue specific. Component of the BAF complex, which includes at least actin (ACTB), ARID1A/BAF250A, ARID1B/BAF250B, SMARCA2/BRM, SMARCA4/BRG1, ACTL6A/BAF53, ACTL6B/BAF53B, SMARCE1/BAF57, SMARCC1/BAF155, SMARCC2/BAF170, SMARCB1/SNF5/INI1, and one or more SMARCD1/BAF60A, SMARCD2/BAF60B, or SMARCD3/BAF60C. In muscle cells, the BAF complex also contains DPF3. Component of the SWI/SNF-B (PBAF) chromatin remodeling complex, at least composed of SMARCA4/BRG1, SMARCB1/BAF47/SNF5, ACTL6A/BAF53A or ACTL6B/BAF53B, SMARCE1/BAF57, SMARCD1/BAF60A, SMARCD2/BAF60B, perhaps SMARCD3/BAF60C, SMARCC1/BAF155, SMARCC2/BAF170, PBRM1/BAF180, ARID2/BAF200 and actin (ACTB). Interacts with UNKL. Interacts with CEBPE. In terms of processing, ubiquitinated through a signaling process involving RAC1 and the RING finger protein UNKL.

The protein localises to the nucleus. Functionally, involved in transcriptional activation and repression of select genes by chromatin remodeling (alteration of DNA-nucleosome topology). Component of SWI/SNF chromatin remodeling complexes that carry out key enzymatic activities, changing chromatin structure by altering DNA-histone contacts within a nucleosome in an ATP-dependent manner. Critical regulator of myeloid differentiation, controlling granulocytopoiesis and the expression of genes involved in neutrophil granule formation. The polypeptide is SWI/SNF-related matrix-associated actin-dependent regulator of chromatin subfamily D member 2 (Smarcd2) (Rattus norvegicus (Rat)).